The primary structure comprises 344 residues: Sulfate/thiosulfate import ATP-binding protein CysA (344 aa).

Residues 3–233 enclose the ABC transporter domain; sequence ILIDNVSKNF…PESAFVMSFL (231 aa). 35–42 serves as a coordination point for ATP; it reads GPSGCGKS.

This sequence belongs to the ABC transporter superfamily. Sulfate/tungstate importer (TC 3.A.1.6) family. In terms of assembly, the complex is composed of two ATP-binding proteins (CysA), two transmembrane proteins (CysT and CysW) and a solute-binding protein (CysP).

It localises to the cell inner membrane. It carries out the reaction sulfate(out) + ATP + H2O = sulfate(in) + ADP + phosphate + H(+). The enzyme catalyses thiosulfate(out) + ATP + H2O = thiosulfate(in) + ADP + phosphate + H(+). In terms of biological role, part of the ABC transporter complex CysAWTP involved in sulfate/thiosulfate import. Responsible for energy coupling to the transport system. This is Sulfate/thiosulfate import ATP-binding protein CysA from Gloeobacter violaceus (strain ATCC 29082 / PCC 7421).